The chain runs to 451 residues: Ubiquinone biosynthesis monooxygenase COQ6, mitochondrial (451 aa).

It belongs to the UbiH/COQ6 family. As to quaternary structure, component of a multi-subunit COQ enzyme complex. Requires FAD as cofactor.

The protein localises to the mitochondrion inner membrane. The enzyme catalyses a 4-hydroxy-3-(all-trans-polyprenyl)benzoate + 2 reduced [2Fe-2S]-[ferredoxin] + O2 + 2 H(+) = a 3,4-dihydroxy-5-(all-trans-polyprenyl)benzoate + 2 oxidized [2Fe-2S]-[ferredoxin] + H2O. It catalyses the reaction a 2-methoxy-6-(all-trans-polyprenyl)phenol + 2 reduced [2Fe-2S]-[ferredoxin] + O2 + 2 H(+) = a 2-methoxy-6-(all-trans-polyprenyl)benzene-1,4-diol + 2 oxidized [2Fe-2S]-[ferredoxin] + H2O. Its pathway is cofactor biosynthesis; ubiquinone biosynthesis. In terms of biological role, FAD-dependent monooxygenase required for two non-consecutive steps during ubiquinone biosynthesis. Required for the C5-ring hydroxylation during ubiquinone biosynthesis by catalyzing the hydroxylation of 4-hydroxy-3-(all-trans-polyprenyl)benzoic acid to 3,4-dihydroxy-5-(all-trans-polyprenyl)benzoic acid. Also acts downstream of coq4, for the C1-hydroxylation during ubiquinone biosynthesis by catalyzing the hydroxylation of 2-methoxy-6-(all-trans-polyprenyl)phenol to 2-methoxy-6-(all-trans-polyprenyl)benzene-1,4-diol. The electrons required for the hydroxylation reaction are funneled indirectly to coq-6 from NADPH via a ferredoxin/ferredoxin reductase system. In Caenorhabditis elegans, this protein is Ubiquinone biosynthesis monooxygenase COQ6, mitochondrial.